A 358-amino-acid polypeptide reads, in one-letter code: Probable anti-sigma-M factor YhdL (358 aa).

The chain crosses the membrane as a helical span at residues 74-96 (ISVLAVISTLMILPLCTLGSYLY).

In terms of assembly, the N-terminus of YhdL interacts with sigma-M. YhdL interacts specifically with YhdK.

It is found in the membrane. In Bacillus subtilis (strain 168), this protein is Probable anti-sigma-M factor YhdL (yhdL).